Reading from the N-terminus, the 262-residue chain is Phosphatidylserine decarboxylase proenzyme (262 aa).

Residues D86, H142, and S226 each act as charge relay system; for autoendoproteolytic cleavage activity in the active site. The Schiff-base intermediate with substrate; via pyruvic acid; for decarboxylase activity role is filled by S226. At S226 the chain carries Pyruvic acid (Ser); by autocatalysis.

It belongs to the phosphatidylserine decarboxylase family. PSD-B subfamily. Prokaryotic type I sub-subfamily. As to quaternary structure, heterodimer of a large membrane-associated beta subunit and a small pyruvoyl-containing alpha subunit. Requires pyruvate as cofactor. In terms of processing, is synthesized initially as an inactive proenzyme. Formation of the active enzyme involves a self-maturation process in which the active site pyruvoyl group is generated from an internal serine residue via an autocatalytic post-translational modification. Two non-identical subunits are generated from the proenzyme in this reaction, and the pyruvate is formed at the N-terminus of the alpha chain, which is derived from the carboxyl end of the proenzyme. The autoendoproteolytic cleavage occurs by a canonical serine protease mechanism, in which the side chain hydroxyl group of the serine supplies its oxygen atom to form the C-terminus of the beta chain, while the remainder of the serine residue undergoes an oxidative deamination to produce ammonia and the pyruvoyl prosthetic group on the alpha chain. During this reaction, the Ser that is part of the protease active site of the proenzyme becomes the pyruvoyl prosthetic group, which constitutes an essential element of the active site of the mature decarboxylase.

The protein localises to the cell membrane. The enzyme catalyses a 1,2-diacyl-sn-glycero-3-phospho-L-serine + H(+) = a 1,2-diacyl-sn-glycero-3-phosphoethanolamine + CO2. The protein operates within phospholipid metabolism; phosphatidylethanolamine biosynthesis; phosphatidylethanolamine from CDP-diacylglycerol: step 2/2. Its function is as follows. Catalyzes the formation of phosphatidylethanolamine (PtdEtn) from phosphatidylserine (PtdSer). This Bacillus anthracis protein is Phosphatidylserine decarboxylase proenzyme.